Consider the following 83-residue polypeptide: RNA-binding protein Hfq (83 aa).

Residues 11–71 (DTFLNHVRKN…ISTIMPGHPV (61 aa)) enclose the Sm domain.

It belongs to the Hfq family. In terms of assembly, homohexamer.

RNA chaperone that binds small regulatory RNA (sRNAs) and mRNAs to facilitate mRNA translational regulation in response to envelope stress, environmental stress and changes in metabolite concentrations. Also binds with high specificity to tRNAs. The protein is RNA-binding protein Hfq of Methylobacterium radiotolerans (strain ATCC 27329 / DSM 1819 / JCM 2831 / NBRC 15690 / NCIMB 10815 / 0-1).